Consider the following 574-residue polypeptide: Septation ring formation regulator EzrA (574 aa).

Residues 1–7 (MSSGIIL) are Extracellular-facing. A helical transmembrane segment spans residues 8–26 (LLVAIVLLVIIAYVVGVVI). The Cytoplasmic segment spans residues 27-574 (RKRNDTLIAN…YEKTQERIRF (548 aa)). Coiled coils occupy residues 104-141 (VRAK…EEKN), 275-343 (LVSL…SAKY), and 473-525 (DIEA…VQKS).

Belongs to the EzrA family.

It localises to the cell membrane. In terms of biological role, negative regulator of FtsZ ring formation; modulates the frequency and position of FtsZ ring formation. Inhibits FtsZ ring formation at polar sites. Interacts either with FtsZ or with one of its binding partners to promote depolymerization. The chain is Septation ring formation regulator EzrA from Streptococcus agalactiae serotype III (strain NEM316).